Consider the following 217-residue polypeptide: GTP cyclohydrolase 1 (217 aa).

3 residues coordinate Zn(2+): Cys108, His111, and Cys179.

This sequence belongs to the GTP cyclohydrolase I family. Toroid-shaped homodecamer, composed of two pentamers of five dimers.

The catalysed reaction is GTP + H2O = 7,8-dihydroneopterin 3'-triphosphate + formate + H(+). The protein operates within cofactor biosynthesis; 7,8-dihydroneopterin triphosphate biosynthesis; 7,8-dihydroneopterin triphosphate from GTP: step 1/1. The polypeptide is GTP cyclohydrolase 1 (Shewanella denitrificans (strain OS217 / ATCC BAA-1090 / DSM 15013)).